We begin with the raw amino-acid sequence, 298 residues long: UDP-N-acetylenolpyruvoylglucosamine reductase (298 aa).

In terms of domain architecture, FAD-binding PCMH-type spans lysine 26–glutamate 191. The active site involves arginine 170. The active-site Proton donor is the serine 220. The active site involves glutamate 290.

It belongs to the MurB family. FAD is required as a cofactor.

It localises to the cytoplasm. The catalysed reaction is UDP-N-acetyl-alpha-D-muramate + NADP(+) = UDP-N-acetyl-3-O-(1-carboxyvinyl)-alpha-D-glucosamine + NADPH + H(+). Its pathway is cell wall biogenesis; peptidoglycan biosynthesis. Cell wall formation. The sequence is that of UDP-N-acetylenolpyruvoylglucosamine reductase from Listeria monocytogenes serovar 1/2a (strain ATCC BAA-679 / EGD-e).